The chain runs to 893 residues: Alpha-actinin-1 (893 aa).

Residues 1–248 (MDHHYDPQQT…IMTYVSSFYH (248 aa)) are actin-binding. Tyrosine 13 carries the phosphotyrosine; by FAK1 modification. 2 consecutive Calponin-homology (CH) domains span residues 32–136 (KQQR…LRFA) and 145–251 (TSAK…HAFS). 4 Spectrin repeats span residues 275-385 (QLME…WLLN), 395-500 (HLAE…ALER), 510-621 (QLYL…ALME), and 631-734 (RLRK…EVEN). EF-hand domains lie at 747–782 (EQMN…LGYD) and 788–823 (QGEA…ETAD). 5 residues coordinate Ca(2+): aspartate 760, aspartate 762, serine 764, threonine 766, and glutamate 771.

It belongs to the alpha-actinin family. As to quaternary structure, homodimer; antiparallel. Interacts with PDLIM4 (via PDZ domain).

Its subcellular location is the cytoplasm. The protein resides in the cytoskeleton. It is found in the myofibril. The protein localises to the sarcomere. It localises to the z line. Its subcellular location is the cell membrane. The protein resides in the cell junction. It is found in the cell projection. The protein localises to the ruffle. Its function is as follows. F-actin cross-linking protein is thought to anchor actin to a variety of intracellular structures. This is a bundling protein. The protein is Alpha-actinin-1 (ACTN1) of Gallus gallus (Chicken).